We begin with the raw amino-acid sequence, 668 residues long: Tyrosine-protein phosphatase non-receptor type ptp-2 (668 aa).

2 SH2 domains span residues 10–113 and 134–232; these read NFYY…KKPV and WWHG…EEPL. The region spanning 264–580 is the Tyrosine-protein phosphatase domain; sequence ISEEFDRLSQ…QFLYKALAFY (317 aa). The Phosphocysteine intermediate role is filled by C518. The disordered stretch occupies residues 603–668; sequence PRRLRPTPNA…SSTLLKSTKK (66 aa). 2 stretches are compositionally biased toward low complexity: residues 616-634 and 652-668; these read SSAR…SSRT and STSS…STKK.

This sequence belongs to the protein-tyrosine phosphatase family. Non-receptor class 2 subfamily. In terms of tissue distribution, expressed in embryonic cells, developing vulva, body wall muscles, head neurons and gonadal sheath cells.

The protein localises to the cytoplasm. It carries out the reaction O-phospho-L-tyrosyl-[protein] + H2O = L-tyrosyl-[protein] + phosphate. Functionally, involved in embryonic and larval development. Plays a role in oogenesis by regulating mpk-1 phosphorylation and oocyte maturation in response to major sperm protein (MSP). During the formation of neuromuscular junctions at the larval stage, negatively regulates membrane protrusion from body wall muscles probably downstream of receptor egl-15. Plays a role in fluid homeostasis probably downstream of receptor egl-15 and adapter soc-1. Promotes vulva induction and negatively regulates fertility probably downstream of receptor let-23. Negatively regulates daf-2-mediated repression of dauer formation. The polypeptide is Tyrosine-protein phosphatase non-receptor type ptp-2 (Caenorhabditis elegans).